The primary structure comprises 422 residues: Metallocarboxypeptidase A (422 aa).

The first 17 residues, 1–17 (MRSVLSFALLAANVVSA), serve as a signal peptide directing secretion. A propeptide spans 18–112 (AVLAPFDYSG…FEAYSAGYAP (95 aa)) (activation peptide). The Peptidase M14 domain maps to 119–419 (SYHSYQDHLS…AGTVAMLKAV (301 aa)). Positions 179 and 182 each coordinate Zn(2+). Substrate contacts are provided by residues 179-182 (HARE), Arg-237, and 254-255 (NR). A disulfide bond links Cys-248 and Cys-271. His-309 provides a ligand contact to Zn(2+). Substrate is bound at residue 310-311 (SY). Glu-385 acts as the Proton donor/acceptor in catalysis.

It belongs to the peptidase M14 family. Requires Zn(2+) as cofactor.

The protein resides in the secreted. Extracellular metalloprotease that contributes to pathogenicity. The protein is Metallocarboxypeptidase A (MCPA) of Arthroderma otae (strain ATCC MYA-4605 / CBS 113480) (Microsporum canis).